A 162-amino-acid chain; its full sequence is MKIDKAIFTNQFGVPLPSDNPYVALHDFVYDLEVAIPEDEFEAFKEQLANPRNSCIIFQTYEMLQELKDGQSSLREDLNHLSHGQNVLKKNMVYLNGTFECISNVIRANNQILMLEFGKSNRKSEEILNYKSAKQMNSNLSTIYRVLPLIKIFLMNIRNCLN.

This is an uncharacterized protein from Schizosaccharomyces pombe (strain 972 / ATCC 24843) (Fission yeast).